The chain runs to 784 residues: DNA repair and recombination protein RAD54-like (784 aa).

A required for chromatin remodeling, strand pairing activities and coupling of ATPase activity region spans residues 2–9 (RRSLAPSQ). The residue at position 22 (T22) is a Phosphothreonine. In terms of domain architecture, Helicase ATP-binding spans 169–344 (EGKKGNFNGC…FSLVNFVNPE (176 aa)). 182–189 (DEMGLGKT) contacts ATP. The DEGH box motif lies at 295-298 (DEGH). The Helicase C-terminal domain maps to 501 to 658 (LLDFMLATIR…NNESAEKHFT (158 aa)). A disordered region spans residues 742 to 784 (QAIKESEETKQEAEDTSIPAKSKRKRSTTPESDDCNDEDFKGF). A compositionally biased stretch (basic and acidic residues) spans 745–754 (KESEETKQEA).

Belongs to the SNF2/RAD54 helicase family. As to quaternary structure, interacts (via N-terminus) with spn-A/Rad51.

The protein resides in the nucleus. In terms of biological role, involved in mitotic DNA repair and meiotic recombination. Functions in the recombinational DNA repair pathway. Essential for interhomolog gene conversion (GC), but may have a less important role in intersister GC than spn-A/Rad51. In the presence of DNA, spn-A/Rad51 enhances the ATPase activity of okr/Rad54. This Drosophila willistoni (Fruit fly) protein is DNA repair and recombination protein RAD54-like.